The chain runs to 253 residues: uncharacterized protein (253 aa).

S145 contributes to the substrate binding site. Y159 acts as the Proton acceptor in catalysis.

This sequence belongs to the short-chain dehydrogenases/reductases (SDR) family.

This is an uncharacterized protein from Mycobacterium tuberculosis (strain CDC 1551 / Oshkosh).